A 56-amino-acid chain; its full sequence is Large ribosomal subunit protein bL32 (56 aa).

Residues 1–16 are compositionally biased toward basic residues; sequence MAVQKSKKSRSMRGMR. Residues 1–22 form a disordered region; the sequence is MAVQKSKKSRSMRGMRRSHDAL.

Belongs to the bacterial ribosomal protein bL32 family.

This chain is Large ribosomal subunit protein bL32, found in Aliivibrio salmonicida (strain LFI1238) (Vibrio salmonicida (strain LFI1238)).